We begin with the raw amino-acid sequence, 819 residues long: Disintegrin and metalloproteinase domain-containing protein 9 (819 aa).

An N-terminal signal peptide occupies residues 1–28 (MGSGARFPSGTLRVRWLLLLGLVGPVLG). Topologically, residues 29–697 (AARPGFQQTS…YNEMNTALRD (669 aa)) are extracellular. N-linked (GlcNAc...) asparagine glycans are attached at residues Asn125, Asn144, Asn154, and Asn231. The Peptidase M12B domain occupies 212-406 (RYVELFIVVD…KGGNCLLNIP (195 aa)). 7 disulfide bridges follow: Cys322/Cys401, Cys363/Cys385, Cys365/Cys370, Cys473/Cys493, Cys644/Cys656, Cys650/Cys662, and Cys664/Cys673. Residue His347 coordinates Zn(2+). The active site involves Glu348. Positions 351 and 357 each coordinate Zn(2+). N-linked (GlcNAc...) asparagine glycosylation is found at Asn381 and Asn487. In terms of domain architecture, Disintegrin spans 414–501 (APSCGNKLVD…FCQPDVFIQN (88 aa)). Residues 644-698 (CDVQKKCHGHGVCNSNKNCHCENGWAPPNCETKGYGGSVDSGPTYNEMNTALRDG) enclose the EGF-like domain. The helical transmembrane segment at 698-718 (GLLVFFFLIVPLIVCAIFIFI) threads the bilayer. At 719–819 (KRDQLWRSYF…PAPPLYSSLT (101 aa)) the chain is on the cytoplasmic side. Disordered stretches follow at residues 734-763 (QTYESDGKNQANPSRQPGSVPRHVSPVTPP) and 780-819 (AKQPQQFPSRPPPPQPKVSSQGNLIPARPAPAPPLYSSLT). Polar residues predominate over residues 735-750 (TYESDGKNQANPSRQP). The residue at position 758 (Ser758) is a Phosphoserine. Phosphothreonine is present on Thr761.

In terms of assembly, interacts with SH3GL2 and SNX9 through its cytoplasmic tail. Interacts with ITGA6. Requires Zn(2+) as cofactor. In terms of processing, proteolytically cleaved in the trans-Golgi network before it reaches the plasma membrane to generate a mature protein. The removal of the pro-domain occurs via cleavage at two different sites. Processed most likely by a pro-protein convertase such as furin, at the boundary between the pro-domain and the catalytic domain. An additional upstream cleavage pro-protein convertase site (Arg-56/Glu-57) has an important role in the activation of ADAM9. Phosphorylation is induced in vitro by phorbol-12-myristate-13-acetate (PMA). In terms of tissue distribution, widely expressed. Expressed in chondrocytes. Isoform 2 is highly expressed in liver and heart.

It is found in the cell membrane. The protein localises to the secreted. Its activity is regulated as follows. Synthesized as an inactive form which is proteolytically cleaved to generate an active enzyme. Processing at the upstream site is particularly important for activation of the proenzyme, whereas processing at the boundary between the pro-domain and the catalytic domain does not appear to be essential. Inhibited by hydroxamic acid-based inhibitors. Functionally, metalloprotease that cleaves and releases a number of molecules with important roles in tumorigenesis and angiogenesis, such as TEK, KDR, EPHB4, CD40, VCAM1 and CDH5. May mediate cell-cell, cell-matrix interactions and regulate the motility of cells via interactions with integrins. Its function is as follows. May act as alpha-secretase for amyloid precursor protein (APP). This is Disintegrin and metalloproteinase domain-containing protein 9 (ADAM9) from Homo sapiens (Human).